A 257-amino-acid chain; its full sequence is Large ribosomal subunit protein uL3 (257 aa).

Residue Gln-151 is modified to N5-methylglutamine. The segment at 218–257 (YPASIKSAANTNTAPADAPVETPAEEAVVDTAATDGAQES) is disordered. Positions 225 to 236 (AANTNTAPADAP) are enriched in low complexity.

This sequence belongs to the universal ribosomal protein uL3 family. In terms of assembly, part of the 50S ribosomal subunit. Forms a cluster with proteins L14 and L19. Post-translationally, methylated by PrmB.

Functionally, one of the primary rRNA binding proteins, it binds directly near the 3'-end of the 23S rRNA, where it nucleates assembly of the 50S subunit. This chain is Large ribosomal subunit protein uL3, found in Sphingopyxis alaskensis (strain DSM 13593 / LMG 18877 / RB2256) (Sphingomonas alaskensis).